A 417-amino-acid chain; its full sequence is Phosphoglycerate kinase 2 (417 aa).

At Ser-2 the chain carries N-acetylserine. 2 positions are modified to phosphoserine: Ser-2 and Ser-4. Position 11 is an N6-acetyllysine (Lys-11). Residues Val-23, Asp-24, Phe-25, Asn-26, Gln-38, and Arg-39 each coordinate (2R)-3-phosphoglycerate. Lys-48 bears the N6-acetyllysine mark. (2R)-3-phosphoglycerate contacts are provided by Ser-62, His-63, Gly-65, and Arg-66. N6-acetyllysine is present on residues Lys-75, Lys-86, and Lys-97. 2 residues coordinate (2R)-3-phosphoglycerate: Leu-122 and Arg-123. N6-acetyllysine occurs at positions 131 and 146. (2R)-3-phosphoglycerate is bound by residues His-170 and Arg-171. Residue Tyr-196 is modified to Phosphotyrosine. Lys-199 carries the post-translational modification N6-acetyllysine. Gly-214 contacts ADP. Gly-214 provides a ligand contact to CDP. The AMP site is built by Ala-215 and Lys-216. Ala-215 provides a ligand contact to ATP. Ala-215 provides a ligand contact to Mg(2+). 2 residues coordinate Mg(2+): Ala-218 and Asp-219. Asp-219 is a CDP binding site. AMP is bound at residue Lys-220. Lys-220 is a binding site for ATP. Gly-238 provides a ligand contact to ADP. Gly-238 contributes to the CDP binding site. Position 239 (Gly-239) interacts with AMP. Position 239 (Gly-239) interacts with ATP. N6-acetyllysine occurs at positions 267 and 291. Position 313 (Gly-313) interacts with AMP. Gly-313 contributes to the ATP binding site. CDP contacts are provided by Gly-338 and Phe-343. ADP is bound at residue Phe-343. Glu-344 is an AMP binding site. Glu-344, Asp-375, and Thr-376 together coordinate ATP. Asp-375 is a Mg(2+) binding site.

This sequence belongs to the phosphoglycerate kinase family. As to quaternary structure, monomer. Mg(2+) serves as cofactor. In terms of tissue distribution, mainly found in round spermatids. Localized on the principle piece in the sperm (at protein level). Testis-specific. Expression significantly decreased in the testis of elderly men.

It is found in the cytoplasm. It carries out the reaction (2R)-3-phosphoglycerate + ATP = (2R)-3-phospho-glyceroyl phosphate + ADP. It functions in the pathway carbohydrate degradation; glycolysis; pyruvate from D-glyceraldehyde 3-phosphate: step 2/5. In terms of biological role, essential for sperm motility and male fertility. Not required for the completion of spermatogenesis. This is Phosphoglycerate kinase 2 (PGK2) from Homo sapiens (Human).